The chain runs to 339 residues: Anthranilate phosphoribosyltransferase (339 aa).

Residues glycine 81, 84–85 (GD), serine 89, 91–94 (NVSS), 109–117 (KHGNRALSS), and alanine 121 each bind 5-phospho-alpha-D-ribose 1-diphosphate. Glycine 81 lines the anthranilate pocket. Serine 93 serves as a coordination point for Mg(2+). Asparagine 112 contacts anthranilate. Arginine 167 is an anthranilate binding site. Mg(2+) contacts are provided by aspartate 225 and glutamate 226.

The protein belongs to the anthranilate phosphoribosyltransferase family. Homodimer. The cofactor is Mg(2+).

It catalyses the reaction N-(5-phospho-beta-D-ribosyl)anthranilate + diphosphate = 5-phospho-alpha-D-ribose 1-diphosphate + anthranilate. Its pathway is amino-acid biosynthesis; L-tryptophan biosynthesis; L-tryptophan from chorismate: step 2/5. Its function is as follows. Catalyzes the transfer of the phosphoribosyl group of 5-phosphorylribose-1-pyrophosphate (PRPP) to anthranilate to yield N-(5'-phosphoribosyl)-anthranilate (PRA). The polypeptide is Anthranilate phosphoribosyltransferase (Brucella suis (strain ATCC 23445 / NCTC 10510)).